A 237-amino-acid polypeptide reads, in one-letter code: uncharacterized protein (237 aa).

The next 7 membrane-spanning stretches (helical) occupy residues 19-39 (ILNGIWLITALGLVATAGLAW), 51-71 (YDSPPMYVAIGLLLLCMYGLS), 81-101 (IAGVIYLFLLSLVAIVVASLV), 106-126 (IIIVFSTAGAMFLISMLAGLL), 136-156 (FIIMMTLTGLALVIIVNAALM), 159-179 (RPIWIISCLMIVLWSGIISHG), and 209-229 (LYYYFIGFFGILAAIAITLVW).

It localises to the cell membrane. This is an uncharacterized protein from Escherichia coli (strain K12).